The following is a 256-amino-acid chain: MNNDVFPNKFKAALAAKQVQIGCWSALSNPISTEVLGLAGFDWLVLDGEHAPNDISTFIPQLMALKGSASAPVVRVPTNEPVIIKRLLDIGFYNFLIPFVETKEEAEQAVASTRYPPEGIRGVSVSHRANMFGTVADYFAQSNKNITILVQIESQQGVDNVDAIAATEGVDGIFVGPSDLAAALGHLGNASHPDVQKTIQHIFNRASAHGKPSGILAPVEADARRYLEWGATFVAVGSDLGVFRSATQKLADTFKK.

His-50 (proton acceptor) is an active-site residue. Substrate is bound at residue Gln-151. Glu-153 serves as a coordination point for Mg(2+). Residues Ser-178 and Asp-179 each contribute to the substrate site. Asp-179 provides a ligand contact to Mg(2+).

It belongs to the HpcH/HpaI aldolase family. KDGluc aldolase subfamily. As to quaternary structure, homohexamer; trimer of dimers. The cofactor is Mg(2+).

It catalyses the reaction 5-dehydro-4-deoxy-D-glucarate = 2-hydroxy-3-oxopropanoate + pyruvate. The catalysed reaction is 2-dehydro-3-deoxy-D-glucarate = 2-hydroxy-3-oxopropanoate + pyruvate. It functions in the pathway carbohydrate acid metabolism; galactarate degradation; D-glycerate from galactarate: step 2/3. In terms of biological role, catalyzes the reversible retro-aldol cleavage of both 5-keto-4-deoxy-D-glucarate and 2-keto-3-deoxy-D-glucarate to pyruvate and tartronic semialdehyde. The polypeptide is 5-keto-4-deoxy-D-glucarate aldolase (Escherichia coli O157:H7 (strain EC4115 / EHEC)).